A 101-amino-acid polypeptide reads, in one-letter code: Ubiquitin-related modifier 1 homolog (101 aa).

Position 101 is a 1-thioglycine (G101). G101 participates in a covalent cross-link: Glycyl lysine isopeptide (Gly-Lys) (interchain with K-? in acceptor proteins).

Belongs to the URM1 family. As to quaternary structure, interacts with cer. Post-translationally, C-terminal thiocarboxylation occurs in 2 steps, it is first acyl-adenylated (-COAMP) via the hesA/moeB/thiF part of the MOCS3 homolog, then thiocarboxylated (-COSH) via the rhodanese domain of the MOCS3 homolog.

Its subcellular location is the cytoplasm. The protein operates within tRNA modification; 5-methoxycarbonylmethyl-2-thiouridine-tRNA biosynthesis. In terms of biological role, acts as a sulfur carrier required for 2-thiolation of mcm(5)S(2)U at tRNA wobble positions of cytosolic tRNA(Lys), tRNA(Glu) and tRNA(Gln). Serves as sulfur donor in tRNA 2-thiolation reaction by being thiocarboxylated (-COSH) at its C-terminus by MOCS3. The sulfur is then transferred to tRNA to form 2-thiolation of mcm(5)S(2)U. Also acts as a ubiquitin-like protein (UBL) that is covalently conjugated via an isopeptide bond to lysine residues of target proteins such as Prx2/Jafrac1, Ciao1, Eip71CD and GILT1. The thiocarboxylated form serves as substrate for conjugation and oxidative stress specifically induces the formation of UBL-protein conjugates. The polypeptide is Ubiquitin-related modifier 1 homolog (Drosophila yakuba (Fruit fly)).